The chain runs to 657 residues: 1-deoxy-D-xylulose-5-phosphate synthase (657 aa).

Thiamine diphosphate-binding positions include His-73 and 113-115 (SHA). A Mg(2+)-binding site is contributed by Asp-145. Thiamine diphosphate-binding positions include 146-147 (GA), Asn-175, Tyr-293, and Glu-375. A Mg(2+)-binding site is contributed by Asn-175.

It belongs to the transketolase family. DXPS subfamily. Homodimer. Mg(2+) is required as a cofactor. The cofactor is thiamine diphosphate.

The enzyme catalyses D-glyceraldehyde 3-phosphate + pyruvate + H(+) = 1-deoxy-D-xylulose 5-phosphate + CO2. It participates in metabolic intermediate biosynthesis; 1-deoxy-D-xylulose 5-phosphate biosynthesis; 1-deoxy-D-xylulose 5-phosphate from D-glyceraldehyde 3-phosphate and pyruvate: step 1/1. Its function is as follows. Catalyzes the acyloin condensation reaction between C atoms 2 and 3 of pyruvate and glyceraldehyde 3-phosphate to yield 1-deoxy-D-xylulose-5-phosphate (DXP). This is 1-deoxy-D-xylulose-5-phosphate synthase from Renibacterium salmoninarum (strain ATCC 33209 / DSM 20767 / JCM 11484 / NBRC 15589 / NCIMB 2235).